A 251-amino-acid chain; its full sequence is uncharacterized protein (251 aa).

Position 12–36 (12–36) interacts with NADP(+); sequence VVTGASSGIGEATARTLAAQGFHVV. Residue serine 136 participates in substrate binding. The Proton acceptor role is filled by tyrosine 149.

It belongs to the short-chain dehydrogenases/reductases (SDR) family.

This is an uncharacterized protein from Mycobacterium tuberculosis (strain CDC 1551 / Oshkosh).